Reading from the N-terminus, the 230-residue chain is Claudin-2 (230 aa).

Residues 1–7 (MASLGLQ) lie on the Cytoplasmic side of the membrane. A helical transmembrane segment spans residues 8–28 (LVGYVLGLLGLLGTVIAMLLP). Topologically, residues 29–81 (SWRTSSYVGASIVTAVGFSKGLWMECATHSTGITQCDIYSTMLGLPADIQAAQ) are extracellular. Cys-54 and Cys-64 are disulfide-bonded. A helical transmembrane segment spans residues 82–102 (AMMVTSSAMSSLACIVSVVGM). Residues 103–116 (RCTVFFQESRAKDR) are Cytoplasmic-facing. A helical membrane pass occupies residues 117–137 (VAVVGGVFFILGGLLGFIPVA). Over 138–162 (WNLHGILRDFYSPLVPDSMKFEIGE) the chain is Extracellular. A helical membrane pass occupies residues 163 to 183 (ALYLGIISSLFSLIAGIFLCF). Topologically, residues 184 to 230 (SCSPQGNRSNYYDAYQAQPLATRSSPRPGQAPKGKSEFNSYSLTGYV) are cytoplasmic. The interval 205–230 (TRSSPRPGQAPKGKSEFNSYSLTGYV) is disordered. A Glycyl lysine isopeptide (Lys-Gly) (interchain with G-Cter in SUMO) cross-link involves residue Lys-218. Phosphoserine occurs at positions 219 and 223. Polar residues predominate over residues 220–230 (EFNSYSLTGYV). Residues 229–230 (YV) form an interaction with TJP1, TJP2 and TJP3 region.

The protein belongs to the claudin family. In terms of assembly, can form homo- and heteropolymers with other claudins to mediate paracellular barrier and channel functions of tight junctions in response to physiological stimuli. Homopolymers interact with CLDN3, but not CLDN1, homopolymers. Directly interacts with TJP1/ZO-1, TJP2/ZO-2 and TJP3/ZO-3. The disulfide bond is necessary for pore formation, but is not required for correct protein trafficking.

It localises to the cell junction. The protein resides in the tight junction. Its subcellular location is the cell membrane. The catalysed reaction is Na(+)(in) = Na(+)(out). It carries out the reaction K(+)(in) = K(+)(out). The enzyme catalyses Rb(+)(in) = Rb(+)(out). It catalyses the reaction Li(+)(in) = Li(+)(out). The catalysed reaction is Cs(+)(in) = Cs(+)(out). It carries out the reaction Ca(2+)(in) = Ca(2+)(out). The enzyme catalyses methylamine(out) = methylamine(in). It catalyses the reaction choline(out) = choline(in). The catalysed reaction is H2O(in) = H2O(out). Forms paracellular channels: polymerizes in tight junction strands with cation- and water-selective channels through the strands, conveying epithelial permeability in a process known as paracellular tight junction permeability. In intestinal epithelium, allows for sodium and water fluxes from the peritoneal side to the lumen of the intestine to regulate nutrient absorption and clear enteric pathogens as part of mucosal immune response. In kidney, allows passive sodium and calcium reabsorption across proximal tubules from the lumen back to the bloodstream. In the hepatobiliary tract, allows paracellular water and cation fluxes in the hepatic perivenous areas and biliary epithelium to generate bile flow and maintain osmotic gradients. The protein is Claudin-2 (CLDN2) of Bos taurus (Bovine).